The primary structure comprises 746 residues: NAD(P)H-quinone oxidoreductase subunit 5, chloroplastic (746 aa).

The next 16 helical transmembrane spans lie at 9-29 (WIIP…LLLF), 40-60 (WTFL…YLSI), 89-109 (IDPL…LVLI), 125-145 (FAYM…SNLI), 147-167 (VYFF…FWFT), 185-205 (GDFG…SFEF), 221-241 (VNLL…IAKS), 258-278 (TPIS…FLVA), 280-300 (LLPL…IGII), 327-347 (LGYM…FHLI), 354-374 (ALLF…VGYS), 396-416 (TAFL…CFWS), 425-445 (LLFS…TAFY), 547-567 (ILFP…IGIP), 608-628 (FSVS…KPFY), and 723-743 (YLFL…FFYF).

The protein belongs to the complex I subunit 5 family. In terms of assembly, NDH is composed of at least 16 different subunits, 5 of which are encoded in the nucleus.

The protein resides in the plastid. The protein localises to the chloroplast thylakoid membrane. The catalysed reaction is a plastoquinone + NADH + (n+1) H(+)(in) = a plastoquinol + NAD(+) + n H(+)(out). The enzyme catalyses a plastoquinone + NADPH + (n+1) H(+)(in) = a plastoquinol + NADP(+) + n H(+)(out). Functionally, NDH shuttles electrons from NAD(P)H:plastoquinone, via FMN and iron-sulfur (Fe-S) centers, to quinones in the photosynthetic chain and possibly in a chloroplast respiratory chain. The immediate electron acceptor for the enzyme in this species is believed to be plastoquinone. Couples the redox reaction to proton translocation, and thus conserves the redox energy in a proton gradient. This is NAD(P)H-quinone oxidoreductase subunit 5, chloroplastic (ndhF) from Olimarabidopsis pumila (Dwarf rocket).